We begin with the raw amino-acid sequence, 91 residues long: Small ribosomal subunit protein bS16c (91 aa).

Belongs to the bacterial ribosomal protein bS16 family.

The protein localises to the plastid. The protein resides in the chloroplast. The chain is Small ribosomal subunit protein bS16c from Pelargonium hortorum (Common geranium).